We begin with the raw amino-acid sequence, 371 residues long: Cytochrome b (371 aa).

4 consecutive transmembrane segments (helical) span residues 25–45 (FGSM…FLAV), 69–90 (WMMQ…YIHI), 105–125 (WMSG…GYVL), and 170–190 (FFAL…LHII). Histidine 75 and histidine 89 together coordinate heme b. Residues histidine 174 and histidine 188 each coordinate heme b. Residue histidine 193 participates in a ubiquinone binding. A run of 4 helical transmembrane segments spans residues 218-238 (HKDL…VSFF), 280-300 (LGGA…PFTH), 312-332 (FSQL…WAAT), and 339-358 (FIVI…LLIP).

It belongs to the cytochrome b family. The cytochrome bc1 complex contains 3 respiratory subunits (MT-CYB, CYC1 and UQCRFS1), 2 core proteins (UQCRC1 and UQCRC2) and probably 6 low-molecular weight proteins. Heme b is required as a cofactor.

It localises to the mitochondrion inner membrane. Component of the ubiquinol-cytochrome c reductase complex (complex III or cytochrome b-c1 complex) that is part of the mitochondrial respiratory chain. The b-c1 complex mediates electron transfer from ubiquinol to cytochrome c. Contributes to the generation of a proton gradient across the mitochondrial membrane that is then used for ATP synthesis. The sequence is that of Cytochrome b (MT-CYB) from Leiopython albertisii (Northern white-lipped python).